Here is a 301-residue protein sequence, read N- to C-terminus: MYAPVESNEGFNFKPELPTSSAYYRLLKKLRRQVGHAIRDFNMIEDGDKVMVCVSGGKDSYTLLDILLQFKRIAPINFDIVAVNLDQKQPGFPEDVLPRYMEENNIPYYILEKDTYSITKRLTPEGKTYCAVCSRLRRGSLYGFAQEIGATKVALGHHRDDIIATFFLNLFHGGSLKAMPPKLLSSDKKNILIRPLAYVEEKDIIKYAELRKFPIIPCNLCGSQENLQRAMINEMLREWDRQYPKRLHSIFGALQNVSPSQLADRDLFDFEVLDSQRELDFKDPEELKKRLDVVNLSFAAE.

A PP-loop motif motif is present at residues 55 to 60 (SGGKDS). Residues Cys130, Cys133, and Cys221 each coordinate [4Fe-4S] cluster.

This sequence belongs to the TtcA family. In terms of assembly, homodimer. It depends on Mg(2+) as a cofactor. Requires [4Fe-4S] cluster as cofactor.

It localises to the cytoplasm. The catalysed reaction is cytidine(32) in tRNA + S-sulfanyl-L-cysteinyl-[cysteine desulfurase] + AH2 + ATP = 2-thiocytidine(32) in tRNA + L-cysteinyl-[cysteine desulfurase] + A + AMP + diphosphate + H(+). Its pathway is tRNA modification. Functionally, catalyzes the ATP-dependent 2-thiolation of cytidine in position 32 of tRNA, to form 2-thiocytidine (s(2)C32). The sulfur atoms are provided by the cysteine/cysteine desulfurase (IscS) system. The sequence is that of tRNA-cytidine(32) 2-sulfurtransferase from Acinetobacter baumannii (strain SDF).